Reading from the N-terminus, the 470-residue chain is MLSVFNTLTRQKEPFKPITPGVVKMYVCGPTVYNYIHIGNARSAIAFDTIRRYFEYCGYHVDYVSNFTDVDDKLIKRAAEDHTTVPAVADRFIKAFMEDTTAVNIEPATVHPRASENIPEIIAFVQALIEKGYAYESAGDVYYRARKFKKYGQLSDQRIDDLEVGASQHTADEETDRKEDPIDFALWKAAKPGEISWESPWGAGRPGWHIECSVMSTKYLGDTFDIHGGGQDLEFPHHENEIAQSEAKTGKTFANYWLHNGFVTVGDDNEKMSKSLGNFVTVHDIIKTVDPQVLRFFMATTQYRRPIQYTQANLDEAANNLDKLRNAYRNLTFRLQDATNGTDTAVAEQLQTLITNFGTAMDDDFNVQNGVAAVYELAKLANVYAAKATVQKETLIALQKALVQLTGVFGVTFETANATLADDAIQALIDEREAARKAKDFAKADQIRDDLKVQGIMLEDTPQGVRFRKE.

Position 28 (C28) interacts with Zn(2+). Positions 30-40 (PTVYNYIHIGN) match the 'HIGH' region motif. Zn(2+)-binding residues include C212, H237, and E241. Positions 271 to 275 (KMSKS) match the 'KMSKS' region motif. An ATP-binding site is contributed by K274.

Belongs to the class-I aminoacyl-tRNA synthetase family. As to quaternary structure, monomer. Zn(2+) is required as a cofactor.

The protein localises to the cytoplasm. It carries out the reaction tRNA(Cys) + L-cysteine + ATP = L-cysteinyl-tRNA(Cys) + AMP + diphosphate. The sequence is that of Cysteine--tRNA ligase from Lactiplantibacillus plantarum (strain ATCC BAA-793 / NCIMB 8826 / WCFS1) (Lactobacillus plantarum).